The chain runs to 120 residues: Small ribosomal subunit protein bS16 (120 aa).

Residues 81–120 (GLAKRPTRNNPQKAEPGEKAKERAAKRAEKAAAPAEDAAA) are disordered. Residues 95-110 (EPGEKAKERAAKRAEK) are compositionally biased toward basic and acidic residues. The segment covering 111-120 (AAAPAEDAAA) has biased composition (low complexity).

This sequence belongs to the bacterial ribosomal protein bS16 family.

The polypeptide is Small ribosomal subunit protein bS16 (Methylorubrum extorquens (strain CM4 / NCIMB 13688) (Methylobacterium extorquens)).